Reading from the N-terminus, the 841-residue chain is Alpha-glucuronidase A (841 aa).

The N-terminal stretch at 1 to 20 is a signal peptide; the sequence is MRGSNLFQLTLALLLSLVAA. N51, N76, N149, N222, N279, N310, N343, N450, N465, N527, N576, N682, N723, and N732 each carry an N-linked (GlcNAc...) asparagine glycan.

This sequence belongs to the glycosyl hydrolase 67 family.

The protein localises to the secreted. It carries out the reaction an alpha-D-glucuronoside + H2O = D-glucuronate + an alcohol. Functionally, alpha-glucuronidase involved in the hydrolysis of xylan, a major structural heterogeneous polysaccharide found in plant biomass representing the second most abundant polysaccharide in the biosphere, after cellulose. Releases 4-O-methylglucuronic acid from xylan. This Aspergillus tubingensis protein is Alpha-glucuronidase A (aguA).